We begin with the raw amino-acid sequence, 424 residues long: Translation initiation factor 2 subunit gamma (424 aa).

Residues L23–E220 enclose the tr-type G domain. Positions G32–T39 are G1. Mg(2+) is bound by residues D35, T39, G60, and S62. Residue D35–T40 participates in GTP binding. The interval G60–K64 is G2. Positions D107–G110 are G3. GTP is bound by residues N163 to D166 and S198 to Q200. The tract at residues N163–D166 is G4. A G5 region spans residues S198–Q200.

It belongs to the TRAFAC class translation factor GTPase superfamily. Classic translation factor GTPase family. EIF2G subfamily. In terms of assembly, heterotrimer composed of an alpha, a beta and a gamma chain. The cofactor is Mg(2+).

The catalysed reaction is GTP + H2O = GDP + phosphate + H(+). Its function is as follows. eIF-2 functions in the early steps of protein synthesis by forming a ternary complex with GTP and initiator tRNA. This is Translation initiation factor 2 subunit gamma from Archaeoglobus fulgidus (strain ATCC 49558 / DSM 4304 / JCM 9628 / NBRC 100126 / VC-16).